We begin with the raw amino-acid sequence, 632 residues long: DNA mismatch repair protein MutL (632 aa).

Residues 376–397 are disordered; the sequence is EQPQAEPRQSFTPGSGAGSGYQ.

The protein belongs to the DNA mismatch repair MutL/HexB family.

Functionally, this protein is involved in the repair of mismatches in DNA. It is required for dam-dependent methyl-directed DNA mismatch repair. May act as a 'molecular matchmaker', a protein that promotes the formation of a stable complex between two or more DNA-binding proteins in an ATP-dependent manner without itself being part of a final effector complex. This chain is DNA mismatch repair protein MutL, found in Pseudomonas entomophila (strain L48).